The following is a 302-amino-acid chain: Vacuolar iron transporter (302 aa).

Over 1–70 (MPASGAGYAG…HTNTSSDYVK (70 aa)) the chain is Cytoplasmic. Residues 71 to 91 (AVVFGGLDGIVTIFAIVAGCV) form a helical membrane-spanning segment. Over 92–99 (GADLSCSQ) the chain is Vacuolar. A helical membrane pass occupies residues 100 to 120 (VLMVGLGNLLADAISMGFGEY). The Cytoplasmic segment spans residues 121 to 211 (VSAAAEKDFV…IKRGLVMFTA (91 aa)). Fe cation is bound by residues E137, E140, E148, E151, M185, and E189. Residues 212-232 (FCFFGLLPLAGFIGWVAAFGL) traverse the membrane as a helical segment. The Vacuolar segment spans residues 233–235 (GAE). A helical transmembrane segment spans residues 236-256 (ADMAFLMACVVSIMTLFILGF). Residues 257–276 (SKGKFVGQNPTKSACLMAMN) are Cytoplasmic-facing. A helical transmembrane segment spans residues 277–297 (GGCAGTVAYGVGSLLQLVVGA). Topologically, residues 298–302 (NLTAA) are vacuolar.

The protein belongs to the CCC1 family.

It localises to the vacuole membrane. It catalyses the reaction Fe(2+)(in) = Fe(2+)(out). In terms of biological role, vacuolar iron transporter involved in the transfer of iron ions from the cytosol to the vacuole for intracellular iron storage. Plays an essential role in detoxification of excess iron. Important for parasite survival within macrophages and parasite virulence in vivo. This is Vacuolar iron transporter from Toxoplasma gondii (strain ATCC 50861 / VEG).